A 496-amino-acid polypeptide reads, in one-letter code: Membrane-bound lytic murein transglycosylase F (496 aa).

An N-terminal signal peptide occupies residues 1 to 31 (MPIFSTRVLTYLRCIFRLFIGLMLLLTLVGC). The non-LT domain stretch occupies residues 32 to 271 (DFYTPSSQLE…KLDEKYFGHV (240 aa)). The interval 273 to 496 (NFDFVDTRTF…AEVVKQITLR (224 aa)) is LT domain. E316 is an active-site residue. The disordered stretch occupies residues 464–485 (HRREELDEDDSSEPQSTERPTV).

It in the N-terminal section; belongs to the bacterial solute-binding protein 3 family. This sequence in the C-terminal section; belongs to the transglycosylase Slt family.

It localises to the cell outer membrane. It catalyses the reaction Exolytic cleavage of the (1-&gt;4)-beta-glycosidic linkage between N-acetylmuramic acid (MurNAc) and N-acetylglucosamine (GlcNAc) residues in peptidoglycan, from either the reducing or the non-reducing ends of the peptidoglycan chains, with concomitant formation of a 1,6-anhydrobond in the MurNAc residue.. In terms of biological role, murein-degrading enzyme that degrades murein glycan strands and insoluble, high-molecular weight murein sacculi, with the concomitant formation of a 1,6-anhydromuramoyl product. Lytic transglycosylases (LTs) play an integral role in the metabolism of the peptidoglycan (PG) sacculus. Their lytic action creates space within the PG sacculus to allow for its expansion as well as for the insertion of various structures such as secretion systems and flagella. This Aeromonas salmonicida (strain A449) protein is Membrane-bound lytic murein transglycosylase F.